The sequence spans 146 residues: Transcriptional regulator MraZ (146 aa).

SpoVT-AbrB domains are found at residues 5–51 (NHPT…PLQE) and 80–123 (GQMV…NHEA).

Belongs to the MraZ family. As to quaternary structure, forms oligomers.

Its subcellular location is the cytoplasm. It localises to the nucleoid. The protein is Transcriptional regulator MraZ of Acidobacterium capsulatum (strain ATCC 51196 / DSM 11244 / BCRC 80197 / JCM 7670 / NBRC 15755 / NCIMB 13165 / 161).